Reading from the N-terminus, the 372-residue chain is N-methyl-L-tryptophan oxidase (372 aa).

4 to 34 (DLIIIGSGSVGAAAGYYATRAGLNVLMTDAH) serves as a coordination point for FAD. Residue C308 is modified to S-8alpha-FAD cysteine.

It belongs to the MSOX/MTOX family. MTOX subfamily. Monomer. FAD serves as cofactor.

It carries out the reaction N(alpha)-methyl-L-tryptophan + O2 + H2O = L-tryptophan + formaldehyde + H2O2. Its function is as follows. Catalyzes the oxidative demethylation of N-methyl-L-tryptophan. This chain is N-methyl-L-tryptophan oxidase, found in Escherichia coli O6:H1 (strain CFT073 / ATCC 700928 / UPEC).